A 1028-amino-acid chain; its full sequence is MAPETKGQRSISHFFKSQSSSQKLNKDDTEYSGNIIDLTNGDEKVSSRLANFEHKPNKSSKSPNELDTSKRKSSKDNEHVDGDPEPVKKKPRTSQSLSRSKSKPQSVGSNSKKLTPLEKQFVEMKQSNLDKILAIQVGYKFKFFGEDAVIASKILSIMLIPGNIKLDEYQHDRFAYCSIPDNRLHIHLKRLLNQGLKVGVAKQTETAAIKSIDSTNKSGLFEREITGVYTKATYMGDELLTGDPNINRTSITDDEMGDYIFCIDESHSKDIGMIAIQPITGDIIYDTFNDNVTRDELETRLVYLNPSEILVINNSTEISKETIKMINIVNNKVNIIHRPRRQQTDYTNEIYNFFNTIDEGKYKDLGEHYLLKFPNNIQSCMIELIKYLEEFKLSNIFTIISNVSCFSNSKTCLVLPSSTVQALEIFQNMTDPNSNKGSLIWLLNHTRTRMGNRLLVKWISKPLIDKAQIEERLQGIEDLTFKFNHFIDSLKNQLDKIGKASIDLEKNLIKVHYSSTYQLDKISRKEVYLLLKCFDDILSMIKQFGKPTNNILESIHSPLLLRIFDELMQLAKEDTVRCLLDMISADALDDSNLNDQKIKFFNLNYFKDQQIISQLSEISNVESLLNDELIEIRKMLKRPQLNYITSSKETYLVEVRNGKMVDSLPKDWIKINGTKTVSRFRSPEITRLHKQLQYHNDMLIRNCDKAFNAYLFKIDNNYEFFSKIIRNLSTFDCLLSLSAVSSINSNYARPKIVEDKQIIQMKNSRNPIIENLSVNYSNYISNDINISYDEDRVLIITGPNMGGKSTYVKQVALLVIMAQIGSYIPCDEATVGIFDSIFIRMGARDNILQNQSTFMIEMLECSHILKNMTSNSLIILDEIGRGTGTNDGIAIAYSILNYLIEEPRKPLTLFITHFPSLHVLEDKFKGIATNYHMGFHEVSKSNQEFPEVVFLYNLVRGVVGNSYGLNVAKLAGIPNSIINNAYTKSTEIRDAIESDWPKKLIKMIKSLREQNDARVELLEIEQLCNNID.

A disordered region spans residues 1–114 (MAPETKGQRS…QSVGSNSKKL (114 aa)). Positions 10–23 (SISHFFKSQSSSQK) are enriched in low complexity. Composition is skewed to basic and acidic residues over residues 41 to 56 (GDEKVSSRLANFEHKP) and 67 to 88 (DTSKRKSSKDNEHVDGDPEPVK). Residues 93 to 113 (TSQSLSRSKSKPQSVGSNSKK) are compositionally biased toward polar residues. Positions 109 to 232 (SNSKKLTPLE…REITGVYTKA (124 aa)) are mispair-binding domain. 798–805 (GPNMGGKS) is a binding site for ATP.

It belongs to the DNA mismatch repair MutS family. MSH3 subfamily. In terms of assembly, heterodimer consisting of MSH2-MSH3 (MutS beta). Forms a ternary complex with MutL alpha (MLH1-PMS1).

The protein resides in the nucleus. Functionally, component of the post-replicative DNA mismatch repair system (MMR). Heterodimerizes with MSH2 to form MutS beta, which binds to DNA mismatches thereby initiating DNA repair. MSH3 provides substrate-binding and substrate specificity to the complex. When bound, the MutS beta heterodimer bends the DNA helix and shields approximately 20 base pairs. Acts mainly to repair insertion-deletion loops (IDLs) from 2 to 13 nucleotides in size, but can also repair base-base and single insertion-deletion mismatches that occur during replication. After mismatch binding, forms a ternary complex with the MutL alpha heterodimer, which is thought to be responsible for directing the downstream MMR events, including strand discrimination, excision, and resynthesis. ATP binding and hydrolysis play a pivotal role in mismatch repair functions. This Debaryomyces hansenii (strain ATCC 36239 / CBS 767 / BCRC 21394 / JCM 1990 / NBRC 0083 / IGC 2968) (Yeast) protein is DNA mismatch repair protein MSH3 (MSH3).